Consider the following 324-residue polypeptide: Ribose 1,5-bisphosphate isomerase (324 aa).

Residues 22 to 25 (RGAG) and Arg65 contribute to the substrate site. Cys135 functions as the Proton acceptor in the catalytic mechanism. Residue 137–139 (SKA) participates in substrate binding. The Proton donor role is filled by Asp204. Residues 214–215 (NK) and Lys240 each bind substrate.

This sequence belongs to the eIF-2B alpha/beta/delta subunits family. R15P isomerase subfamily.

It carries out the reaction alpha-D-ribose 1,5-bisphosphate = D-ribulose 1,5-bisphosphate. Its function is as follows. Catalyzes the isomerization of ribose 1,5-bisphosphate (R15P) to ribulose 1,5-bisphosphate (RuBP), the CO(2) acceptor and substrate for RubisCO. Functions in an archaeal AMP degradation pathway, together with AMP phosphorylase and RubisCO. The protein is Ribose 1,5-bisphosphate isomerase of Pyrococcus horikoshii (strain ATCC 700860 / DSM 12428 / JCM 9974 / NBRC 100139 / OT-3).